The following is a 179-amino-acid chain: Bifunctional protein PyrR (179 aa).

The short motif at 99–111 (VILVDDVLYTGRT) is the PRPP-binding element.

It belongs to the purine/pyrimidine phosphoribosyltransferase family. PyrR subfamily. Homodimer and homohexamer; in equilibrium.

The enzyme catalyses UMP + diphosphate = 5-phospho-alpha-D-ribose 1-diphosphate + uracil. Its function is as follows. Regulates transcriptional attenuation of the pyrimidine nucleotide (pyr) operon by binding in a uridine-dependent manner to specific sites on pyr mRNA. This disrupts an antiterminator hairpin in the RNA and favors formation of a downstream transcription terminator, leading to a reduced expression of downstream genes. Functionally, also displays a weak uracil phosphoribosyltransferase activity which is not physiologically significant. The chain is Bifunctional protein PyrR from Brevibacillus brevis (strain 47 / JCM 6285 / NBRC 100599).